We begin with the raw amino-acid sequence, 498 residues long: MRINPTTSGPGVSTLEEKNLGRIAQIIGPVLDVVFPPGKMPNIYNALVVKGRDTVGQQINVTCEVQQLLGNNRVRAVAMSATDGLMRGMEVIDTGAPLSVPVGGATLGRIFNVLGEPVDNLGPVDTRTTSPIHRSAPAFIQLDTRLSIFETGIKVVDLLAPYRRGGKIGLFGGAGVGKTVLIMELINNIAKAHGGVSVFGGVGERTREGNDLYMEMKESGVINEENIAESKVALVHGQMNEPPGARMRVGLTALTMAEYFRDVNEQDVLLFIDNIFRFVQAGSEVSALLGRMPSAVGYQPTLSTEMGSLQERITSTKEGSITSIQAVYVPADDLTDPAPATTFAHLDATTVLSRGLAAKGIYPAVDPLDSTSTMLQPRIVGEEHYETAQRVKQTSQRYKELQDIIAILGSDELSEEDRLTVARARKIERFLSQPFFVAEVFTGSPGKYVGLAETIRGFQLILSGELDGLPEQAFYLVGNIDEATAKAMNLDVESKLKK.

Residue 172 to 179 coordinates ATP; sequence GGAGVGKT.

Belongs to the ATPase alpha/beta chains family. In terms of assembly, F-type ATPases have 2 components, CF(1) - the catalytic core - and CF(0) - the membrane proton channel. CF(1) has five subunits: alpha(3), beta(3), gamma(1), delta(1), epsilon(1). CF(0) has four main subunits: a(1), b(1), b'(1) and c(9-12).

Its subcellular location is the plastid. The protein resides in the chloroplast thylakoid membrane. It catalyses the reaction ATP + H2O + 4 H(+)(in) = ADP + phosphate + 5 H(+)(out). Produces ATP from ADP in the presence of a proton gradient across the membrane. The catalytic sites are hosted primarily by the beta subunits. This chain is ATP synthase subunit beta, chloroplastic, found in Drimys granadensis.